The sequence spans 314 residues: MTRRNQTAISQFFLLGLPFPPEYQHLFYALFLAMYLTTLLGNLIIIILILLDSHLHTPMYLFLSNLSFADLCFSSVTMPKLLQNMQSQVPSIPYAGCLAQIYFFLFFGDLGNFLLVAMAYDRYVAICFPLHYMSIMSPKLCVSLVVLSWVLTTFHAMLHTLLMARLSFCEDSVIPHYFCDMSTLLKVACSDTHDNELAIFILGGPIVVLPFLLIIVSYARIVSSIFKVPSSQSIHKAFSTCGSHLSVVSLFYGTVIGLYLCPSANNSTVKETVMSLMYTMVTPMLNPFIYSLRNRDIKDALEKIMCKKQIPSFL.

The Extracellular portion of the chain corresponds to 1 to 25; the sequence is MTRRNQTAISQFFLLGLPFPPEYQH. A glycan (N-linked (GlcNAc...) asparagine) is linked at asparagine 5. The chain crosses the membrane as a helical span at residues 26 to 50; that stretch reads LFYALFLAMYLTTLLGNLIIIILIL. Residues 51-57 lie on the Cytoplasmic side of the membrane; that stretch reads LDSHLHT. A helical transmembrane segment spans residues 58-79; it reads PMYLFLSNLSFADLCFSSVTMP. The Extracellular segment spans residues 80-100; that stretch reads KLLQNMQSQVPSIPYAGCLAQ. A disulfide bridge connects residues cysteine 97 and cysteine 189. The chain crosses the membrane as a helical span at residues 101 to 120; sequence IYFFLFFGDLGNFLLVAMAY. The Cytoplasmic segment spans residues 121–139; the sequence is DRYVAICFPLHYMSIMSPK. Residues 140 to 158 form a helical membrane-spanning segment; it reads LCVSLVVLSWVLTTFHAML. Residues 159–196 lie on the Extracellular side of the membrane; sequence HTLLMARLSFCEDSVIPHYFCDMSTLLKVACSDTHDNE. A helical transmembrane segment spans residues 197–219; it reads LAIFILGGPIVVLPFLLIIVSYA. The Cytoplasmic segment spans residues 220 to 236; the sequence is RIVSSIFKVPSSQSIHK. The chain crosses the membrane as a helical span at residues 237–260; sequence AFSTCGSHLSVVSLFYGTVIGLYL. The Extracellular portion of the chain corresponds to 261–272; sequence CPSANNSTVKET. Residues 273-292 traverse the membrane as a helical segment; sequence VMSLMYTMVTPMLNPFIYSL. Over 293-314 the chain is Cytoplasmic; it reads RNRDIKDALEKIMCKKQIPSFL.

Belongs to the G-protein coupled receptor 1 family. Olfactory epithelium.

The protein localises to the cell membrane. Odorant receptor. In Rattus norvegicus (Rat), this protein is Olfactory receptor-like protein I9.